A 395-amino-acid chain; its full sequence is S-adenosylmethionine synthase (395 aa).

Residue His16 coordinates ATP. Mg(2+) is bound at residue Asp18. Glu44 contacts K(+). The L-methionine site is built by Glu57 and Gln100. The tract at residues 100–110 is flexible loop; the sequence is QSPDIAQGVDD. ATP is bound by residues 174-176, 241-242, Asp250, 256-257, Ala273, and Lys277; these read DAK, RF, and RK. An L-methionine-binding site is contributed by Asp250. An L-methionine-binding site is contributed by Lys281.

This sequence belongs to the AdoMet synthase family. In terms of assembly, homotetramer; dimer of dimers. Mg(2+) is required as a cofactor. Requires K(+) as cofactor.

It localises to the cytoplasm. It catalyses the reaction L-methionine + ATP + H2O = S-adenosyl-L-methionine + phosphate + diphosphate. It participates in amino-acid biosynthesis; S-adenosyl-L-methionine biosynthesis; S-adenosyl-L-methionine from L-methionine: step 1/1. Its function is as follows. Catalyzes the formation of S-adenosylmethionine (AdoMet) from methionine and ATP. The overall synthetic reaction is composed of two sequential steps, AdoMet formation and the subsequent tripolyphosphate hydrolysis which occurs prior to release of AdoMet from the enzyme. In Limosilactobacillus reuteri (strain DSM 20016) (Lactobacillus reuteri), this protein is S-adenosylmethionine synthase.